Consider the following 5206-residue polypeptide: Multifunctional-autoprocessing repeats-in-toxin (5206 aa).

An N-terminal signal peptide occupies residues 1-19 (MGKPFWRSVEYFFTGNYSA). RtxA repeat units follow at residues 101 to 118 (GAAG…GDVS), 121 to 138 (GAAA…GNVT), 141 to 157 (GAGG…QGNL), 161 to 184 (GAGA…GDVT), 187 to 204 (GAGA…GNIT), 207 to 224 (GAGA…GDIT), 255 to 272 (GVGG…GDIH), 275 to 291 (GGGA…GSSF), 584 to 601 (GAGG…GNVY), 604 to 620 (GGGI…FGNT), 624 to 641 (GGGA…GDLT), 644 to 658 (GAGL…SKQG), 741 to 753 (AGGA…VGDG), 759 to 771 (MLGG…HISG), 782 to 798 (ALGG…GNTL), 801 to 816 (MGGG…DGTT), 820 to 835 (MVGG…NGDT), 841 to 855 (GVGN…GQTL), 858 to 875 (MGAA…TSIA), 877 to 891 (MIGA…GEGN), 896 to 910 (MGGL…GNGD), 915 to 932 (MVAE…MSVA), 934 to 950 (MLAK…GTTL), 972 to 984 (MIGQ…KVGN), 991 to 1006 (MVGK…DGTS), 1031 to 1043 (GKAN…GDGL), 1067 to 1079 (AAAK…HVGD), 1087 to 1102 (AGKG…GTTV), 1110 to 1122 (GNVM…GTTI), 1125 to 1142 (AKGK…LGVN), 1145 to 1159 (WGQA…DGDR), 1163 to 1179 (AKGE…GKEV), 1184 to 1199 (GKAN…DDYT), 1201 to 1217 (AWGK…GRNV), 1220 to 1236 (AKGE…GDSF), 1242 to 1256 (KGNI…MQVT), 1258 to 1275 (AKGK…LSVT), 1296 to 1313 (AWGK…LNVA), and 1315 to 1332 (MKGK…LNIN). Polar residues predominate over residues 1606–1626 (SQQANAVSEHATQNQASQNAL). Disordered regions lie at residues 1606–1682 (SQQA…ESEA) and 1738–1895 (IAAA…EQEA). Residues 1627 to 1646 (SDKERAEADRQRLEQEKQKQ) are compositionally biased toward basic and acidic residues. Positions 1652 to 1671 (GSQSQLESTDQQALGNNGQA) are enriched in polar residues. Positions 1778–1805 (AEAKADAETRKADAVAKSNDAKQAESDA) are enriched in basic and acidic residues. Residues 1825 to 1834 (NKANQAQNDA) are compositionally biased toward polar residues. A compositionally biased stretch (basic and acidic residues) spans 1835 to 1849 (KGTKQNEGDRPDREG). Positions 1870-1880 (SHITTDSQTNA) are enriched in polar residues. The segment at 2377–2461 (ELMSVTELLD…SLLNQVNSRL (85 aa)) is membrane localization region (MLD). Positions 2537–2901 (EYGQVVADTI…HQVTDVLDAL (365 aa)) are rho inactivation domain (RID). Residues 2998 to 3113 (VVLFLHGSGS…MPSMTKAITA (116 aa)) are ABH effector region. Residues 4111–4295 (PTADGGESRF…AENNKVSLSW (185 aa)) enclose the Peptidase C80 domain. 1D-myo-inositol hexakisphosphate-binding positions include 4117-4119 (ESR), 4144-4145 (KH), and arginine 4175. Residue histidine 4181 is the For cysteine protease activity of the active site. Serine 4226 contributes to the 1D-myo-inositol hexakisphosphate binding site. Cysteine 4230 (nucleophile; for cysteine protease activity) is an active-site residue. Residues 4259–4261 (SVR), 4272–4273 (RK), lysine 4285, and lysine 4290 contribute to the 1D-myo-inositol hexakisphosphate site. Disordered regions lie at residues 4333–4362 (GAIG…ANNK) and 4738–4779 (LKEK…ETPD). The span at 4750 to 4762 (SSVSVNGASVNSA) shows a compositional bias: low complexity.

Mg(2+) serves as cofactor.

It is found in the secreted. Its subcellular location is the host cytoplasm. The protein resides in the host cytosol. The protein localises to the host cell membrane. The catalysed reaction is L-lysyl-/S-(2E,6E,10E)-geranylgeranyl-L-cysteinyl-[protein] + hexadecanoyl-CoA = N(6)-hexadecanoyl-L-lysyl-/S-(2E,6E,10E)-geranylgeranyl-L-cysteinyl-[protein] + CoA + H(+). It catalyses the reaction L-lysyl-/S-(2E,6E,10E)-geranylgeranyl-L-cysteinyl-[protein] + dodecanoyl-CoA = N(6)-dodecanoyl-L-lysyl-/S-(2E,6E,10E)-geranylgeranyl-L-cysteinyl-[protein] + CoA + H(+). The enzyme catalyses L-lysyl-/S-(2E,6E,10E)-geranylgeranyl-L-cysteinyl-[protein] + decanoyl-CoA = N(6)-decanoyl-L-lysyl-/S-(2E,6E,10E)-geranylgeranyl-L-cysteinyl-[protein] + CoA + H(+). In terms of biological role, precursor of a multifunctional toxin that causes destruction of the actin cytoskeleton by covalent cross-linking of actin and inactivation of Rho GTPases when translocated into the host cytoplasm. Upon translocation into the host cell, undergoes autoprocessing in cis mediated by the peptidase C80 domain (also named CPD domain): the protease activity is activated upon binding inositol hexakisphosphate (InsP6) present at the host cell membrane and delivers the Cysteine protease domain-containing toxin F3 chain to the host cytosol. The Cysteine protease domain-containing toxin F3 chain will then further cleave and release effector toxin chains that cause disassembly of the actin cytoskeleton and enhance V.vulnificus colonization of the small intestine, possibly by facilitating evasion of phagocytic cells. Following autocatalytic cleavage in cis, this chain mediates processing in trans to release other individual toxin chains to the host cytosol. Released effector toxin chains cause disassembly of the actin cytoskeleton and enhance V.vulnificus colonization of the small intestine, possibly by facilitating evasion of phagocytic cells. Its function is as follows. Actin-directed toxin that catalyzes the covalent cross-linking of host cytoplasmic monomeric actin. Mediates the cross-link between 'Lys-50' of one monomer and 'Glu-270' of another actin monomer, resulting in formation of highly toxic actin oligomers that cause cell rounding. The toxin can be highly efficient at very low concentrations by acting on formin homology family proteins: toxic actin oligomers bind with high affinity to formins and adversely affect both nucleation and elongation abilities of formins, causing their potent inhibition in both profilin-dependent and independent manners. Acts as an acid--amino-acid ligase that transfers the gamma-phosphoryl group of ATP to the 'Glu-270' actin residue, resulting in the formation of an activated acyl phosphate intermediate. This intermediate is further hydrolyzed and the energy of hydrolysis is utilized for the formation of the amide bond between actin subunits. Functionally, N-epsilon-fatty acyltransferase that mediates lysine-palmitoylation of host Rho GTPase proteins, with a strong preference for host Rac1. After delivery to the host cytosol, localizes to the host cell membrane where it palmitoylates host Rho GTPase proteins, resulting in loss of all active GTP-bound Rho and subsequent actin depolymerization. Prenylation of host Rac1 at the C-terminus is required for lysine-palmitoylation. In terms of biological role, indirectly activates the small GTPase CDC42. The protein is Multifunctional-autoprocessing repeats-in-toxin of Vibrio vulnificus.